A 754-amino-acid polypeptide reads, in one-letter code: 5-methyltetrahydropteroyltriglutamate--homocysteine methyltransferase (754 aa).

5-methyltetrahydropteroyltri-L-glutamate is bound by residues 19-22 and Lys121; that span reads RELK. L-homocysteine-binding positions include 423-425 and Glu476; that span reads IGS. Residues 423-425 and Glu476 contribute to the L-methionine site; that span reads IGS. 5-methyltetrahydropteroyltri-L-glutamate is bound by residues 507–508 and Trp553; that span reads RC. Asp591 serves as a coordination point for L-homocysteine. Asp591 provides a ligand contact to L-methionine. Position 597 (Glu597) interacts with 5-methyltetrahydropteroyltri-L-glutamate. Residues His633, Cys635, and Glu657 each contribute to the Zn(2+) site. Catalysis depends on His686, which acts as the Proton donor. Position 718 (Cys718) interacts with Zn(2+).

The protein belongs to the vitamin-B12 independent methionine synthase family. Requires Zn(2+) as cofactor.

It carries out the reaction 5-methyltetrahydropteroyltri-L-glutamate + L-homocysteine = tetrahydropteroyltri-L-glutamate + L-methionine. It participates in amino-acid biosynthesis; L-methionine biosynthesis via de novo pathway; L-methionine from L-homocysteine (MetE route): step 1/1. Its function is as follows. Catalyzes the transfer of a methyl group from 5-methyltetrahydrofolate to homocysteine resulting in methionine formation. The chain is 5-methyltetrahydropteroyltriglutamate--homocysteine methyltransferase from Corynebacterium efficiens (strain DSM 44549 / YS-314 / AJ 12310 / JCM 11189 / NBRC 100395).